The chain runs to 142 residues: Large ribosomal subunit protein uL11 (142 aa).

The protein belongs to the universal ribosomal protein uL11 family. In terms of assembly, part of the ribosomal stalk of the 50S ribosomal subunit. Interacts with L10 and the large rRNA to form the base of the stalk. L10 forms an elongated spine to which L12 dimers bind in a sequential fashion forming a multimeric L10(L12)X complex. In terms of processing, one or more lysine residues are methylated.

Forms part of the ribosomal stalk which helps the ribosome interact with GTP-bound translation factors. The polypeptide is Large ribosomal subunit protein uL11 (Actinobacillus succinogenes (strain ATCC 55618 / DSM 22257 / CCUG 43843 / 130Z)).